The chain runs to 399 residues: Elongation factor Tu (399 aa).

One can recognise a tr-type G domain in the interval 10–209 (KPHVNIGTIG…AVDSYIPTPK (200 aa)). Residues 19-26 (GHVDHGKT) are G1. 19 to 26 (GHVDHGKT) serves as a coordination point for GTP. Thr26 contacts Mg(2+). Residues 60-64 (GITIA) are G2. The G3 stretch occupies residues 81 to 84 (DCPG). GTP is bound by residues 81–85 (DCPGH) and 136–139 (NKTD). The interval 136–139 (NKTD) is G4. The segment at 174–176 (SAL) is G5.

Belongs to the TRAFAC class translation factor GTPase superfamily. Classic translation factor GTPase family. EF-Tu/EF-1A subfamily. As to quaternary structure, monomer.

Its subcellular location is the cytoplasm. It carries out the reaction GTP + H2O = GDP + phosphate + H(+). Its function is as follows. GTP hydrolase that promotes the GTP-dependent binding of aminoacyl-tRNA to the A-site of ribosomes during protein biosynthesis. This is Elongation factor Tu from Campylobacter hominis (strain ATCC BAA-381 / DSM 21671 / CCUG 45161 / LMG 19568 / NCTC 13146 / CH001A).